The chain runs to 663 residues: Probable acetolactate synthase 2, chloroplastic (663 aa).

Over residues 1–26 (MAAAAAAASLSVSDAAAKLPKPGGQV) the composition is skewed to low complexity. Positions 1–56 (MAAAAAAASLSVSDAAAKLPKPGGQVQRRRDRDRPRVDAAACTRDSRRPTRERCST) are disordered. The N-terminal 79 residues, 1-79 (MAAAAAAASL…TPVRAPVRTR (79 aa)), are a transit peptide targeting the chloroplast. 2 stretches are compositionally biased toward basic and acidic residues: residues 28–37 (RRRDRDRPRV) and 44–54 (RDSRRPTRERC). Position 132 (E132) interacts with thiamine diphosphate. A disulfide bridge links C152 with C298. FAD contacts are provided by residues R234, 340-361 (HGTV…LGVR), and 383-402 (DIDP…ICAD). Positions 478–558 (QHQMWATQHY…VKVMVLNNQH (81 aa)) are thiamine pyrophosphate binding. Mg(2+) is bound by residues D529 and N556.

This sequence belongs to the TPP enzyme family. Mg(2+) serves as cofactor. The cofactor is thiamine diphosphate.

The protein resides in the plastid. It is found in the chloroplast. It catalyses the reaction 2 pyruvate + H(+) = (2S)-2-acetolactate + CO2. The protein operates within amino-acid biosynthesis; L-isoleucine biosynthesis; L-isoleucine from 2-oxobutanoate: step 1/4. It participates in amino-acid biosynthesis; L-valine biosynthesis; L-valine from pyruvate: step 1/4. This is Probable acetolactate synthase 2, chloroplastic (ALS2) from Oryza sativa subsp. japonica (Rice).